Here is a 286-residue protein sequence, read N- to C-terminus: ATP synthase gamma chain (286 aa).

This sequence belongs to the ATPase gamma chain family. In terms of assembly, F-type ATPases have 2 components, CF(1) - the catalytic core - and CF(0) - the membrane proton channel. CF(1) has five subunits: alpha(3), beta(3), gamma(1), delta(1), epsilon(1). CF(0) has three main subunits: a, b and c.

It localises to the cell inner membrane. In terms of biological role, produces ATP from ADP in the presence of a proton gradient across the membrane. The gamma chain is believed to be important in regulating ATPase activity and the flow of protons through the CF(0) complex. The sequence is that of ATP synthase gamma chain from Christiangramia forsetii (strain DSM 17595 / CGMCC 1.15422 / KT0803) (Gramella forsetii).